The following is a 282-amino-acid chain: Bis(5'-nucleosyl)-tetraphosphatase, symmetrical (282 aa).

The protein belongs to the Ap4A hydrolase family.

It catalyses the reaction P(1),P(4)-bis(5'-adenosyl) tetraphosphate + H2O = 2 ADP + 2 H(+). Its function is as follows. Hydrolyzes diadenosine 5',5'''-P1,P4-tetraphosphate to yield ADP. The polypeptide is Bis(5'-nucleosyl)-tetraphosphatase, symmetrical (Salmonella paratyphi A (strain ATCC 9150 / SARB42)).